We begin with the raw amino-acid sequence, 102 residues long: ATP-dependent Clp protease adapter protein ClpS (102 aa).

This sequence belongs to the ClpS family. In terms of assembly, binds to the N-terminal domain of the chaperone ClpA.

Its function is as follows. Involved in the modulation of the specificity of the ClpAP-mediated ATP-dependent protein degradation. In Shewanella pealeana (strain ATCC 700345 / ANG-SQ1), this protein is ATP-dependent Clp protease adapter protein ClpS.